The sequence spans 94 residues: Co-chaperonin GroES (94 aa).

The protein belongs to the GroES chaperonin family. Heptamer of 7 subunits arranged in a ring. Interacts with the chaperonin GroEL.

The protein localises to the cytoplasm. Functionally, together with the chaperonin GroEL, plays an essential role in assisting protein folding. The GroEL-GroES system forms a nano-cage that allows encapsulation of the non-native substrate proteins and provides a physical environment optimized to promote and accelerate protein folding. GroES binds to the apical surface of the GroEL ring, thereby capping the opening of the GroEL channel. The sequence is that of Co-chaperonin GroES from Streptococcus mitis.